The sequence spans 24 residues: Fraternine (24 aa).

Cys-11 and Cys-24 are oxidised to a cystine. Cys-24 carries the post-translational modification Cysteine amide.

In terms of tissue distribution, expressed by the venom gland.

It localises to the secreted. Wasp venom peptide that acts as a potent mast cell degranulating peptide without hemolytic activity. Shows neuroprotective effect, since it prevents the death of dopaminergic neurons of the brain substantia nigra region and recovers motor deficit in a 6-hydroxydopamine (6-OHDA)-induced murine model of Parkinson disease. In Parachartergus fraternus (Artistic wasp), this protein is Fraternine.